Consider the following 520-residue polypeptide: Cytochrome P450 monooxygenase 176 (520 aa).

N6 carries N-linked (GlcNAc...) asparagine glycosylation. A helical membrane pass occupies residues L10–I27. Residues N141 and N270 are each glycosylated (N-linked (GlcNAc...) asparagine). Position 445 (C445) interacts with heme. N517 carries an N-linked (GlcNAc...) asparagine glycan.

The protein belongs to the cytochrome P450 family. Heme serves as cofactor.

It localises to the membrane. The protein operates within secondary metabolite biosynthesis. In terms of biological role, cytochrome P450 monooxygenase that is able to use delta(6)-protoilludene as a substrate to produce delta(6)-protoilludene-5-ol and an unidentified hydroxyprotoilludene. Is also able to use phenanthrene as a substrate for oxidation. This Postia placenta (strain ATCC 44394 / Madison 698-R) (Brown rot fungus) protein is Cytochrome P450 monooxygenase 176.